The chain runs to 681 residues: MSASPEDFERAAQLRRELEAHDHAYYVLDAPTVPDAEYDRLFRELDALERRHPELLVPDSPTRRVGGAPVPGLVPVRHAVPMLSIRTETDTTSGGVIAFDTRVRNALELGPHAPPVEYLGELKFDGLAISLRYENGMLVRAATRGDGYTGEDVTHSVRTIRQIPLRLPGRPPALIEVRGEIYMRRDAFERLNARQSETGGKVFVNPRNAAAGAVRQLDARIAARRPLSFFAYGFGEIGESGGWNMPATQGEMLDALDALGIPVCEHRVVASGPDGLIAFHDRIAAARDSLPYDIDGVVYKVNRFDLQRRLGFVTREPRWAVAHKYPAQEEITELVDIEIQVGRTGALTPVARLKPVFVGGVTVTNATLHNEEEIQRKGLLIGDQVIVRRAGDVIPQIVAPVVERRNGSERPFVMPQTCPVCGSHAEKQPDEAVTRCSGGLFCPAQRKQALLHFAGRRAMDIEGLGDKLVDQLVDGGIVSTPADLYRLGLVKLANLPRMADKSAANLLAAIEKSRHATLARFIFALGIRNVGEATARELARHFGSLDALMDADIERLQQVADVGPIVAHSIAGFFAEMHNREVIEQLRAAGVHWDEGVPAVAADGPASGKTFVLTGALPTMSRDDAKALIESHGGKVSGSVSKKTDYVVAGAEAGSKLAKAQELGVAILDEDGLRRLLEQPA.

Residues 35–39 (DAEYD), 84–85 (SI), and glutamate 121 contribute to the NAD(+) site. Catalysis depends on lysine 123, which acts as the N6-AMP-lysine intermediate. 4 residues coordinate NAD(+): arginine 144, glutamate 180, lysine 300, and lysine 324. Positions 418, 421, 436, and 442 each coordinate Zn(2+). The region spanning 601 to 681 (AADGPASGKT…GLRRLLEQPA (81 aa)) is the BRCT domain.

The protein belongs to the NAD-dependent DNA ligase family. LigA subfamily. The cofactor is Mg(2+). Mn(2+) is required as a cofactor.

The catalysed reaction is NAD(+) + (deoxyribonucleotide)n-3'-hydroxyl + 5'-phospho-(deoxyribonucleotide)m = (deoxyribonucleotide)n+m + AMP + beta-nicotinamide D-nucleotide.. Its function is as follows. DNA ligase that catalyzes the formation of phosphodiester linkages between 5'-phosphoryl and 3'-hydroxyl groups in double-stranded DNA using NAD as a coenzyme and as the energy source for the reaction. It is essential for DNA replication and repair of damaged DNA. The protein is DNA ligase of Aromatoleum aromaticum (strain DSM 19018 / LMG 30748 / EbN1) (Azoarcus sp. (strain EbN1)).